The following is a 737-amino-acid chain: Ribosome-releasing factor 2, mitochondrial (737 aa).

The N-terminal 36 residues, 1–36 (MLCNRLHKAAFAARLRPRLPATVASCRQVHNSDGTI), are a transit peptide targeting the mitochondrion. Residues 39–318 (KRIRNIGILA…SVLNFLPAPS (280 aa)) enclose the tr-type G domain. Residues 48–55 (AHIDAGKT), 112–116 (DTPGH), and 166–169 (NKMD) contribute to the GTP site.

Belongs to the TRAFAC class translation factor GTPase superfamily. Classic translation factor GTPase family. EF-G/EF-2 subfamily.

The protein localises to the mitochondrion. Functionally, mitochondrial GTPase that mediates the disassembly of ribosomes from messenger RNA at the termination of mitochondrial protein biosynthesis. Not involved in the GTP-dependent ribosomal translocation step during translation elongation. The polypeptide is Ribosome-releasing factor 2, mitochondrial (Anopheles gambiae (African malaria mosquito)).